A 227-amino-acid polypeptide reads, in one-letter code: 2,3-bisphosphoglycerate-dependent phosphoglycerate mutase (227 aa).

Substrate is bound by residues 8-15 (RHGKSVWN), 21-22 (TG), Arg58, 110-113 (ERMY), Lys121, 137-138 (RR), and 181-182 (GN). The Tele-phosphohistidine intermediate role is filled by His9. The Proton donor/acceptor role is filled by Glu110.

This sequence belongs to the phosphoglycerate mutase family. BPG-dependent PGAM subfamily.

It catalyses the reaction (2R)-2-phosphoglycerate = (2R)-3-phosphoglycerate. Its pathway is carbohydrate degradation; glycolysis; pyruvate from D-glyceraldehyde 3-phosphate: step 3/5. Functionally, catalyzes the interconversion of 2-phosphoglycerate and 3-phosphoglycerate. The protein is 2,3-bisphosphoglycerate-dependent phosphoglycerate mutase of Chlamydia abortus (strain DSM 27085 / S26/3) (Chlamydophila abortus).